Consider the following 297-residue polypeptide: Endonuclease G, mitochondrial (297 aa).

The N-terminal 48 residues, 1–48 (MRALRAGLTLASGAGLGAVVEGWRRRREDARAAPGLLGRLPVLPVAAA), are a transit peptide targeting the mitochondrion. Thr-128 bears the Phosphothreonine; by GSK3-beta mark. His-141 functions as the Proton acceptor in the catalytic mechanism. Asn-172 provides a ligand contact to Mg(2+). The essential for deoxyribonuclease activity stretch occupies residues 286-296 (AGSLKAITAGS). Residue Ser-288 is modified to Phosphoserine; by GSK3-beta.

This sequence belongs to the DNA/RNA non-specific endonuclease family. In terms of assembly, homodimer; disulfide-linked. Homodimerization is essential for enzyme activity. Interacts with YWHAG. The cofactor is Mg(2+). GSK3-beta-mediated dual phosphorylations at Thr-128 and Ser-288 is necessary for its interaction with YWHAG and the induction of autophagy.

It localises to the mitochondrion. Functionally, endonuclease that preferentially catalyzes the cleavage of double-stranded 5-hydroxymethylcytosine (5hmC)-modified DNA. The 5hmC-modified nucleotide does not increase the binding affinity, but instead increases the efficiency of cutting and specifies the site of cleavage for the modified DNAs. Shows significantly higher affinity for four-stranded Holliday junction over duplex and single-stranded DNAs. Promotes conservative recombination when the DNA is 5hmC-modified. Promotes autophagy through the suppression of mTOR by its phosphorylation-mediated interaction with YWHAG and its endonuclease activity-mediated DNA damage response. GSK3-beta mediated phosphorylation of ENDOG enhances its interaction with YWHAG, leading to the release of TSC2 and PIK3C3 from YWHAG resulting in mTOR pathway suppression and autophagy initiation. Promotes cleavage of mtDNA in response to oxidative and nitrosative stress, in turn inducing compensatory mtDNA replication. This chain is Endonuclease G, mitochondrial (ENDOG), found in Homo sapiens (Human).